The chain runs to 399 residues: MDFQVIIIGGGIVGLATGLKIKQRNPNIKVALLEKEEEVAKHQTGNNSGVIHSGLYYKPGSLKAKNCIEGYHELVRFCEEENIPFELTGKVVVATRKEQVPLLNSLLERGLQNGLKGTRSITLDELKHFEPYCAGVAAIHVPQTGIVDYKLVAEKYAEKFQILGGQVFLGHKVIKVETQNTASIIHTSKGSFSTNLLINCAGLYSDKVAQMNQKESLDVKIIPFRGEYYKIKKEREYLVKNLIYPVPDPNFPFLGVHFTRMMKGGVEAGPNAVLAFKREGYKKSQVNFSELAETLSWPGFQKVASKYWKTGMGELFRSFSKKAFTDALKELIPDIQESDLIEGGAGVRAQACDRTGGLLDDFCIREDQNAIHVLNAPSPAATSSLSIGGTVCEWALKRF.

It belongs to the L2HGDH family. FAD serves as cofactor.

It carries out the reaction (S)-2-hydroxyglutarate + A = 2-oxoglutarate + AH2. Its function is as follows. Catalyzes the dehydrogenation of L-2-hydroxyglutarate (L2HG or(S)-2-hydroxyglutarate) to 2-oxoglutarate (alpha-ketoglutarate). Active in vitro with the artificial electron acceptor 2,6-dichlorophenolindophenol (DCPIP). Also displays a very low oxidase activity in vitro on L-2-hydroxyglutarate with O2 as the electron acceptor, but this activity is most likely not physiological. The polypeptide is L-2-hydroxyglutarate dehydrogenase (Indibacter alkaliphilus (strain CCUG 57479 / KCTC 22604 / LW1)).